A 135-amino-acid chain; its full sequence is ATP synthase epsilon chain (135 aa).

This sequence belongs to the ATPase epsilon chain family. As to quaternary structure, F-type ATPases have 2 components, CF(1) - the catalytic core - and CF(0) - the membrane proton channel. CF(1) has five subunits: alpha(3), beta(3), gamma(1), delta(1), epsilon(1). CF(0) has three main subunits: a, b and c.

The protein resides in the cell inner membrane. In terms of biological role, produces ATP from ADP in the presence of a proton gradient across the membrane. This is ATP synthase epsilon chain from Rhizobium rhizogenes (strain K84 / ATCC BAA-868) (Agrobacterium radiobacter).